A 405-amino-acid chain; its full sequence is Homocitrate synthase AksA (405 aa).

The region spanning 23–274 (IEICDVTLRD…IERYDTTKLT (252 aa)) is the Pyruvate carboxyltransferase domain.

This sequence belongs to the alpha-IPM synthase/homocitrate synthase family.

It catalyses the reaction acetyl-CoA + 2-oxoglutarate + H2O = (2R)-homocitrate + CoA + H(+). The catalysed reaction is 2-oxoadipate + acetyl-CoA + H2O = (R)-dihomocitrate + CoA + H(+). It carries out the reaction 2-oxoheptanedioate + acetyl-CoA + H2O = (R)-trihomocitrate + CoA + H(+). Its pathway is organic acid metabolism; 2-oxosuberate biosynthesis. In terms of biological role, catalyzes the condensation of alpha-ketoglutarate and acetyl-CoA to form (R)-homocitrate. Can also catalyze the condensation of alpha-ketoadipate with acetyl-CoA to form (R)-homo(2)citrate, and the condensation of alpha-ketopimelate with acetyl-CoA to form (R)-homo(3)citrate. These reactions are part of the biosynthesis pathway of coenzyme B and biotin. The polypeptide is Homocitrate synthase AksA (aksA) (Methanosarcina acetivorans (strain ATCC 35395 / DSM 2834 / JCM 12185 / C2A)).